A 1335-amino-acid chain; its full sequence is MSLSPHVENASIPKGSTPIPKNRNVSSIGKGEFLGSSSSNNSSFRMNHYSNSGQPSVLDSIRRPNLTPTFSYSNGVYMPESHRTSSFNDSYLPYDKNPYAKTTGSMSNKSNMKIKTKKNAINTNTRKSSGLIYTTKVDKELSSIDKVNDPNINGLVCAGKTHLGLYKFSPSDRSIKCVHDFITPNSNTSTRGTTSLLPKLSKRTRQNKFSTIADVKTGFNNYKNCIAVCNNSTAISIYDLNKSSSIDNPLITSLCEHTRSINSFDFNMVESNLIISGGQDSCVKIWDLRSNKSKSSNRSDISINTASDSIRDVKWMPGYNFASKNDQGSSTYGNLKSGYKFASIHDSGYLLKFDLRQPAQYEKKLNAHTGPGLCLNWHPNQEYIATGGRDGKCCLWFVGDNANAAENTVLNYGNSPSLHAPNTSLNNSGSLAFPKLTINTGYPVTKLKFKPAYSSNIYNSLLGISSMGDEAEVRIYSLARKYIPKHVLLSETPSLGLVWWDENLIFNIDKGTRINGWDINKEPTVLENLSKNTTTWRDLDGNGLLSVDQEIGSYEVVEPELQPTSSTTCKKHPGTIKNPKNGNPENQGIIGGIKKGFSHTGLTSFTPERPPTLKAGPTFSTKSLTLASGASSFNSSSASLTSLTPQTENREEIAIEPPCIITLDIPQIFNNIRLTKIAHSRKKNVISESSSMKNSPVEKFKYLARQLKFSYIREHNVSDSADTAYKNDIENIDVVKNATETHGDNTTTTNNNDDDDDDDKIIESHLLKKYNFPENNTWATLMNEKVNNKKSKRNSSSSREFDEKDVRSSISSISASRQSHDRSRKIDKNVEAELQEKIQTLVDLISIATHNASVYLSIDDLTNFKIWILIRDSLLWDLKWMTSSQISSDNASNMDANESSDFEAGENLKTGKEFPEEDGAGTSGAESLVEERPQAFRANSDEPSDAEKKPVSKLKEQLKNTEIIPYAQPNEDSDEVLTKLKELQNQRLESRTKMGETVSDDVIIEEDEHEHQEEEQPHDSPTKSAQFHASPIAKSIPILQKREHRKSFIDTFMLHSPNGYNGDTDIGNEDDNISPRFTYNSVSPRSKVSSLQSYATTTSQLETFKKLSSHTAPIIGSPRHAPSRPDSIGREQLSSSLTKKLAKCKKIIADPPWDTKKLIKQLYNQATETGNVVLTVNILFLFQTIYQITEIDIAKDAIAHFLLLLHRYELFGIAADVLKYCPFEDIMGSEGDQSSIRLFCERCGELITNESSKEKLRAEAQQTGNKKIMDKFGYWYCDSCKKKNTSCVLCERPLKKLTMVILPCGHEGHFQCIQEWFLDENEQECPGGCPGVAFI.

The tract at residues 1-39 is disordered; sequence MSLSPHVENASIPKGSTPIPKNRNVSSIGKGEFLGSSSS. WD repeat units follow at residues 207–248, 256–296, 305–342, 367–406, 439–486, and 489–527; these read NKFS…SIDN, EHTR…SKSS, TASD…YKFA, AHTG…NAAE, NTGY…IPKH, and LSET…TVLE. Disordered stretches follow at residues 559-593, 600-619, 630-651, 736-758, and 783-824; these read PELQ…IGGI, TGLT…GPTF, ASSF…ENRE, KNAT…DDDD, and NEKV…DRSR. A compositionally biased stretch (low complexity) spans 630-644; sequence ASSFNSSSASLTSLT. Positions 808-817 are enriched in low complexity; it reads SSISSISASR. Residues 844–884 form a WD 7 repeat; the sequence is LISIATHNASVYLSIDDLTNFKIWILIRDSLLWDLKWMTSS. 2 disordered regions span residues 935–956 and 1007–1037; these read AFRA…KLKE and DEHE…KSIP. Composition is skewed to basic and acidic residues over residues 945-956 and 1009-1021; these read DAEKKPVSKLKE and HEHQ…HDSP. Ser1030, Ser1074, Ser1081, Ser1083, Ser1117, and Ser1127 each carry phosphoserine. WD repeat units lie at residues 1130-1170 and 1217-1256; these read REQL…TETG and VLKY…KEKL. Residues 1294 to 1335 form an RING-type; degenerate zinc finger; that stretch reads LKKLTMVILPCGHEGHFQCIQEWFLDENEQECPGGCPGVAFI.

The protein belongs to the WD repeat RTC1 family.

It is found in the vacuole. Functionally, may be involved in a process influencing telomere capping. This is Restriction of telomere capping protein 1 (RTC1) from Saccharomyces cerevisiae (strain YJM789) (Baker's yeast).